Here is a 439-residue protein sequence, read N- to C-terminus: Guanine deaminase (439 aa).

Zn(2+) contacts are provided by H82 and H84. Residues H84–Q87, R209–F210, H237–E240, and D327 contribute to the substrate site. Zn(2+) is bound by residues H237 and D327.

The protein belongs to the metallo-dependent hydrolases superfamily. ATZ/TRZ family. Zn(2+) is required as a cofactor.

It catalyses the reaction guanine + H2O + H(+) = xanthine + NH4(+). It functions in the pathway purine metabolism; guanine degradation; xanthine from guanine: step 1/1. In terms of biological role, catalyzes the hydrolytic deamination of guanine, producing xanthine and ammonia. This Escherichia coli (strain K12) protein is Guanine deaminase (guaD).